We begin with the raw amino-acid sequence, 779 residues long: Nucleus-vacuole junction protein 2 (779 aa).

At 1–2 (MF) the chain is on the cytoplasmic side. Residues 3–23 (FAFLITYLLGGVTFLPFILFI) traverse the membrane as a helical; Signal-anchor for type II membrane protein segment. The Lumenal segment spans residues 24–779 (YLLTRPTHKS…VRPVPPIPKL (756 aa)). N-linked (GlcNAc...) asparagine glycosylation occurs at N233. Residues 238 to 429 (SSPDTDWLNA…MPNMNDLAFF (192 aa)) enclose the SMP-LTD domain. Over residues 454-465 (PAEKDAKAERKK) the composition is skewed to basic and acidic residues. Disordered stretches follow at residues 454–539 (PAEK…NKSS) and 573–592 (LKTK…QTTL). S473 is modified (phosphoserine). Polar residues predominate over residues 484–494 (RSSNSNDTAPS). N-linked (GlcNAc...) asparagine glycans are attached at residues N489 and N536. 2 N-linked (GlcNAc...) asparagine glycosylation sites follow: N640 and N660. A disordered region spans residues 654–779 (QNAIDFNVTN…VRPVPPIPKL (126 aa)). The segment covering 660–674 (NVTNTHSPSRSISSE) has biased composition (polar residues). Positions 675–691 (KSYKAAERGQQDKHNDV) are enriched in basic and acidic residues. Residues 733–750 (GQPTLHPQGQLPIQNVEQ) show a composition bias toward polar residues.

Its subcellular location is the endoplasmic reticulum membrane. The protein resides in the nucleus membrane. During endoplasmic reticulum (ER) stress or when cellular ceramide levels increase, induces contacts between the ER and medial-Golgi complex to facilitate non-vesicular transport of ceramides from the ER to the Golgi complex where they are converted to complex sphingolipids, preventing toxic ceramide accumulation. The sequence is that of Nucleus-vacuole junction protein 2 (nvj2) from Schizosaccharomyces pombe (strain 972 / ATCC 24843) (Fission yeast).